The following is a 316-amino-acid chain: Phosphate acyltransferase (316 aa).

It belongs to the PlsX family. In terms of assembly, homodimer. Probably interacts with PlsY.

The protein resides in the cytoplasm. The catalysed reaction is a fatty acyl-[ACP] + phosphate = an acyl phosphate + holo-[ACP]. The protein operates within lipid metabolism; phospholipid metabolism. In terms of biological role, catalyzes the reversible formation of acyl-phosphate (acyl-PO(4)) from acyl-[acyl-carrier-protein] (acyl-ACP). This enzyme utilizes acyl-ACP as fatty acyl donor, but not acyl-CoA. This chain is Phosphate acyltransferase, found in Chlamydia abortus (strain DSM 27085 / S26/3) (Chlamydophila abortus).